The following is a 57-amino-acid chain: MSTKDFNLDLVSVSKKDSGASPRITSISLCTPGCKTGALMGCNMKTATCHCSIHVSK.

The propeptide occupies 1-23 (MSTKDFNLDLVSVSKKDSGASPR). The residue at position 25 (T25) is a (Z)-2,3-didehydrobutyrine. The segment at residues 26–30 (SISLC) is a cross-link (lanthionine (Ser-Cys)). Residue S28 is modified to 2,3-didehydroalanine (Ser). Cross-links (beta-methyllanthionine (Thr-Cys)) lie at residues 31–34 (TPGC), 36–42 (TGALMGC), 46–49 (TATC), and 48–51 (TCHC). At S56 the chain carries 2,3-didehydroalanine (Ser).

It belongs to the type A lantibiotic family. Post-translationally, maturation of lantibiotics involves the enzymatic conversion of Thr, and Ser into dehydrated AA and the formation of thioether bonds with cysteine. This is followed by membrane translocation and cleavage of the modified precursor. In terms of processing, the structure of the 2,3-didehydrobutyrine is not discussed in PubMed:8454055. However, in Fig. 1 the residue is diagrammed as the Z-isomer.

In terms of biological role, lanthionine-containing peptide antibiotic (lantibiotic) active on Gram-positive bacteria. The bactericidal activity of lantibiotics is based on depolarization of energized bacterial cytoplasmic membranes, initiated by the formation of aqueous transmembrane pores. This Lactococcus lactis subsp. lactis (Streptococcus lactis) protein is Lantibiotic nisin-A (spaN).